A 161-amino-acid polypeptide reads, in one-letter code: Cyclic pyranopterin monophosphate synthase (161 aa).

Substrate contacts are provided by residues 75 to 77 (MCH) and 115 to 116 (ME). The active site involves aspartate 130.

The protein belongs to the MoaC family. In terms of assembly, homohexamer; trimer of dimers.

The enzyme catalyses (8S)-3',8-cyclo-7,8-dihydroguanosine 5'-triphosphate = cyclic pyranopterin phosphate + diphosphate. The protein operates within cofactor biosynthesis; molybdopterin biosynthesis. Its function is as follows. Catalyzes the conversion of (8S)-3',8-cyclo-7,8-dihydroguanosine 5'-triphosphate to cyclic pyranopterin monophosphate (cPMP). This is Cyclic pyranopterin monophosphate synthase from Bacillus thuringiensis subsp. konkukian (strain 97-27).